Consider the following 301-residue polypeptide: Light-independent protochlorophyllide reductase iron-sulfur ATP-binding protein (301 aa).

The span at 1-13 (MNVTLRPPLTTAP) shows a compositional bias: low complexity. Residues 1-21 (MNVTLRPPLTTAPRRPDGAGS) are disordered. ATP contacts are provided by residues 45-50 (GIGKST) and Lys74. Ser49 lines the Mg(2+) pocket. Residues Cys130 and Cys164 each contribute to the [4Fe-4S] cluster site. ATP-binding positions include 215-216 (NR) and 239-241 (PDL).

It belongs to the NifH/BchL/ChlL family. Homodimer. Protochlorophyllide reductase is composed of three subunits; BchL, BchN and BchB. The cofactor is [4Fe-4S] cluster.

It carries out the reaction chlorophyllide a + oxidized 2[4Fe-4S]-[ferredoxin] + 2 ADP + 2 phosphate = protochlorophyllide a + reduced 2[4Fe-4S]-[ferredoxin] + 2 ATP + 2 H2O. It functions in the pathway porphyrin-containing compound metabolism; bacteriochlorophyll biosynthesis (light-independent). Component of the dark-operative protochlorophyllide reductase (DPOR) that uses Mg-ATP and reduced ferredoxin to reduce ring D of protochlorophyllide (Pchlide) to form chlorophyllide a (Chlide). This reaction is light-independent. The L component serves as a unique electron donor to the NB-component of the complex, and binds Mg-ATP. This Bradyrhizobium sp. (strain BTAi1 / ATCC BAA-1182) protein is Light-independent protochlorophyllide reductase iron-sulfur ATP-binding protein.